A 748-amino-acid polypeptide reads, in one-letter code: Cysteine--tRNA ligase, cytoplasmic (748 aa).

Positions 1 to 25 (MADSSGQQGKGRRVQPQWSPPAGTQ) are disordered. At Ala-2 the chain carries N-acetylalanine. Phosphoserine is present on Ser-19. Cys-55 contributes to the Zn(2+) binding site. L-cysteine is bound at residue Gly-56. Positions 57 to 67 (PTVYDASHMGH) match the 'HIGH' region motif. Phosphoserine is present on Arg-79. Thr-96 is an L-cysteine binding site. The 'KIIK' region signature appears at 101–104 (KIIK). Phosphoserine occurs at positions 305 and 307. 3 residues coordinate Zn(2+): Cys-348, His-373, and Glu-377. His-373 is a binding site for L-cysteine. Residues 406–410 (KMSKS) carry the 'KMSKS' region motif. Lys-409 contributes to the ATP binding site. An N6-acetyllysine modification is found at Lys-503. The segment covering 653–679 (EKRRVEEEKRKKKEEAARRKQEQEAAK) has biased composition (basic and acidic residues). Residues 653-686 (EKRRVEEEKRKKKEEAARRKQEQEAAKLAKMKIP) are disordered. Ser-746 carries the phosphoserine modification.

It belongs to the class-I aminoacyl-tRNA synthetase family. As to quaternary structure, homodimer. The cofactor is Zn(2+).

The protein resides in the cytoplasm. The catalysed reaction is tRNA(Cys) + L-cysteine + ATP = L-cysteinyl-tRNA(Cys) + AMP + diphosphate. Catalyzes the ATP-dependent ligation of cysteine to tRNA(Cys). The polypeptide is Cysteine--tRNA ligase, cytoplasmic (Homo sapiens (Human)).